Reading from the N-terminus, the 129-residue chain is Small ribosomal subunit protein uS13 (129 aa).

Residues 92–114 show a composition bias toward basic residues; it reads HKHNLPVRGQRTKTNARTRRGPR. The tract at residues 92-129 is disordered; it reads HKHNLPVRGQRTKTNARTRRGPRKTVAGRGQKRGATKK.

This sequence belongs to the universal ribosomal protein uS13 family. In terms of assembly, part of the 30S ribosomal subunit. Forms a loose heterodimer with protein S19. Forms two bridges to the 50S subunit in the 70S ribosome.

Functionally, located at the top of the head of the 30S subunit, it contacts several helices of the 16S rRNA. In the 70S ribosome it contacts the 23S rRNA (bridge B1a) and protein L5 of the 50S subunit (bridge B1b), connecting the 2 subunits; these bridges are implicated in subunit movement. Contacts the tRNAs in the A and P-sites. The polypeptide is Small ribosomal subunit protein uS13 (Dehalococcoides mccartyi (strain ATCC BAA-2266 / KCTC 15142 / 195) (Dehalococcoides ethenogenes (strain 195))).